Consider the following 897-residue polypeptide: Macoilin (897 aa).

The next 4 helical transmembrane spans lie at 113-133 (ICYLFIPIRMLIFLATTYVWI), 157-177 (QSWPIVFITCFIVIFELFLRI), 181-201 (PILISFFPNVAEYAGVSPVWP), and 204-224 (LNAFFGAHSIGYPVILITVSM). 2 stretches are compositionally biased toward polar residues: residues 291-304 (IQAASATPPTSSKK) and 329-338 (GNSGFNSTPP). The tract at residues 291 to 375 (IQAASATPPT…DTSSSTIEDQ (85 aa)) is disordered. Residues 351–361 (DMDDGDDSDDD) show a composition bias toward acidic residues. Residues 379-399 (GGISIIRFIFSSAAWLFSFVF) traverse the membrane as a helical segment. Over residues 403 to 413 (TPSENSLSNQQ) the composition is skewed to polar residues. Disordered regions lie at residues 403-535 (TPSE…QEED) and 724-770 (NGSS…SPVP). Residues 414-424 (IDDDEDYEDGD) show a composition bias toward acidic residues. Residues 432–451 (TDSMTSTTKGRANTMPSTTR) are compositionally biased toward polar residues. Low complexity-rich tracts occupy residues 452-467 (SQNNNNSQKQQKQSNG) and 475-490 (SHQNNHQKSNGNSNGH). A coiled-coil region spans residues 503-726 (DTNASNETDI…VQEFQIKNGS (224 aa)). Residues 510–535 (TDIRSMSRELESLRSEISSRRSQEED) are compositionally biased toward basic and acidic residues. The span at 734-761 (ETLMNGRSSTEANNENDTTASDQSSPHQ) shows a compositional bias: polar residues.

Strong expression in many neurons, very weak expression is also detected in others tissues.

The protein resides in the rough endoplasmic reticulum membrane. It is found in the nucleus membrane. In terms of biological role, plays a role in the regulation of neuronal activity. In AWA and AWC neurons, plays a role in regulating olfactory adaptation by controlling the forgetting sensory responses to odorants such as diacetyl and isoamyl alcohol. May play a role in regulating daf-7 expression in ASI neurons in response to bacterial small RNAs. In ASI neurons, promotes dauer formation in response to pheromones such as the ascarosides ascr#2 and ascr#3. The sequence is that of Macoilin from Caenorhabditis elegans.